The following is a 1320-amino-acid chain: MDSIKKNTINRINGLPINHNNLSKTSIISMDDDYNSNSSFYSTNNSILNSVTKNSNYLNNNNNNNNNNNNNNNISISNCNNNNTNNKINEQLKTFNNIFEEKGEFLKEEIDNKFNDIISLMNQSKNQLFLSLNDIDSLYDLSPLSTTSTITLENNNNNNNNLIKFKLFNNDSIKKYILPVSSKTIKFKQRQILIEQQEFNEKHNQQKHLLELQRQQVLSDQQNQFQEQHKQQLSLKQQELEAIQQDTNKVKQQLIETHDKLLIEKEKQFKQDLNSLELNLQNKFTNEYQSKEQEFNKKLEQQQQQLEKQFQQTKELLIVQETLTLKSKLTTEFQEQLKTHQDQINKQELLLKQQEYQLFLKQQEISSIQKQHQDDLSSLKSKLSSDQDQIKKQLLQQESDLLKKQQELLLKQQELDIQSKQLKEEQEKQQQQQEKQQEKQQQQQPVVVPVKPTTSTVVSATTATLIKAPIVSTTTVSTATVSKLVTNGIAKPTPLTTMKQTVTAVPTLMDNKTRLKKLVPTATTTTTKEENNKEYDKMMQELDTQPNNSNLKNLNEKKLETLKQQLTFDDSVSFSNGNDESSINLSKYLEETNKSVENTFDIMSNTLKRKNEPIQQPSSSSSQLSSSQQPSSSSSSSSSSIGLKKRLSDDKTTIVTSKPTNKVQPQSLNSNINNNVVPPSPVAAIANKLKKQQELEKLKLEEEERLRKKQEEQLAKREVEKEQERLEKKKKNDEKRKKVEENQQQRILEEEKKKKEAEDRELARKHKEDSDKKKREEEEDAKKRIQERFRETQEQERKREEFKKQQQEQELARIKKEKLQQEKLQQEKEKQEKQKQQQQQQEEEQQKKKTVQTILPTPQTPSRSANNNYDDAANTASATKAKYALSSILSMVFGATKSPHFKPSTSQDDQDDDDCEDYDGTDENSENEAKGEYQDDSDQEIEEQFENDSDESMASTESNGDIYFNKNKNSNNSNNNNDVNQSRKDKSIVFDSDSLNRNHNDSNNSSEEEEPERDPVFLTPLPKILSNMKNNNNNNTYSNSPVIKGLSPPSSVSDYSPSSESNDCFSPLTPTNNNKINNNKINNNNSNNNSFNNSNSYRGLSPAQIIESHTPKCINRSGESKTSPFLTIRNTPSPLKNSPIKFNMSSASSLSSFDSDNDSDYNDNDIDDGEILGNPNENFTTPLKNQENNNNNNSNNSNTQYPIITSPPSNEDGDENYYFEEEEIDYEYDKRVPDWAKNHNLDNSLKQQRFYDPDRIFSMIGPVYLYEIFPKQDLGGKIKDFSKVKRNLSSDWSRDCNTEKEDISYKKNMGFTNPIIVNKK.

Disordered stretches follow at residues 53-75, 426-447, 611-679, 701-877, and 896-1215; these read KNSN…NNIS, QEKQ…QPVV, NEPI…VVPP, EEEE…NTAS, and TKSP…DGDE. Composition is skewed to low complexity over residues 54–75, 429–447, and 615–640; these read NSNY…NNIS, QQQQ…QPVV, and QQPS…SSSS. A coiled-coil region spans residues 221–444; the sequence is QQNQFQEQHK…KQQEKQQQQQ (224 aa). Positions 653-668 are enriched in polar residues; sequence TIVTSKPTNKVQPQSL. Residues 669–679 show a composition bias toward low complexity; it reads NSNINNNVVPP. A coiled-coil region spans residues 683-855; it reads AAIANKLKKQ…QKKKTVQTIL (173 aa). Basic and acidic residues predominate over residues 701–835; the sequence is EEEERLRKKQ…QEKEKQEKQK (135 aa). Over residues 851-863 the composition is skewed to polar residues; it reads VQTILPTPQTPSR. Positions 864–877 are enriched in low complexity; that stretch reads SANNNYDDAANTAS. Composition is skewed to acidic residues over residues 908–926 and 934–951; these read DDQD…ENSE and QDDS…DSDE. A compositionally biased stretch (low complexity) spans 965–977; sequence NKNKNSNNSNNNN. Positions 981-1000 are enriched in basic and acidic residues; it reads QSRKDKSIVFDSDSLNRNHN. 2 stretches are compositionally biased toward low complexity: residues 1026-1040 and 1047-1061; these read SNMK…YSNS and SPPS…SSES. A compositionally biased stretch (polar residues) spans 1062–1071; the sequence is NDCFSPLTPT. Over residues 1072–1096 the composition is skewed to low complexity; sequence NNNKINNNKINNNNSNNNSFNNSNS. Positions 1120–1136 are enriched in polar residues; sequence SKTSPFLTIRNTPSPLK. Residues 1143–1154 show a composition bias toward low complexity; it reads NMSSASSLSSFD. A compositionally biased stretch (acidic residues) spans 1155-1170; sequence SDNDSDYNDNDIDDGE. Residues 1175–1187 show a composition bias toward polar residues; it reads PNENFTTPLKNQE. The span at 1188 to 1198 shows a compositional bias: low complexity; that stretch reads NNNNNNSNNSN. Residues 1199-1209 show a composition bias toward polar residues; the sequence is TQYPIITSPPS.

It belongs to the INCENP family. As to quaternary structure, interacts with aurK.

It localises to the chromosome. It is found in the centromere. The protein resides in the cytoplasm. The protein localises to the cytoskeleton. Its subcellular location is the spindle. It localises to the nucleus. It is found in the cleavage furrow. In terms of biological role, chromosomal passenger protein that seems to be required for chromosome segregation and the onset of cytokinesis during mitosis. Plays a key role in the abscission of daughter cells at the end of cytokinesis and in the establishment or maintenance of a bipolar spindle. This is Inner centromere protein A (icpA) from Dictyostelium discoideum (Social amoeba).